A 196-amino-acid polypeptide reads, in one-letter code: Putative NADH dehydrogenase/NAD(P)H nitroreductase Smlt0482 (196 aa).

This sequence belongs to the nitroreductase family. HadB/RutE subfamily. FMN serves as cofactor.

The sequence is that of Putative NADH dehydrogenase/NAD(P)H nitroreductase Smlt0482 from Stenotrophomonas maltophilia (strain K279a).